Consider the following 146-residue polypeptide: Single-stranded DNA-binding protein, mitochondrial (146 aa).

Residues 1 to 16 constitute a mitochondrion transit peptide; sequence MLRNASAQILKQFVRH. Residues 29-140 enclose the SSB domain; the sequence is INKVQILGRV…IIADNIVFLS (112 aa).

The protein resides in the mitochondrion. It localises to the mitochondrion matrix. It is found in the mitochondrion nucleoid. Its function is as follows. Binds preferentially and cooperatively to pyrimidine rich single-stranded DNA (ss-DNA). May be required to maintain the copy number of mitochondrial DNA (mtDNA) and play a crucial role during mtDNA replication. Required for retinal ganglion cell differentiation and retinal integrity. This Danio rerio (Zebrafish) protein is Single-stranded DNA-binding protein, mitochondrial.